The chain runs to 429 residues: 3-phosphoshikimate 1-carboxyvinyltransferase (429 aa).

3-phosphoshikimate-binding residues include lysine 20, serine 21, and arginine 25. Phosphoenolpyruvate is bound at residue lysine 20. Phosphoenolpyruvate contacts are provided by glycine 89 and arginine 118. Residues serine 164, serine 165, glutamine 166, serine 192, aspartate 311, and lysine 338 each coordinate 3-phosphoshikimate. Glutamine 166 provides a ligand contact to phosphoenolpyruvate. The active-site Proton acceptor is aspartate 311. Arginine 342 and arginine 384 together coordinate phosphoenolpyruvate.

This sequence belongs to the EPSP synthase family. As to quaternary structure, monomer.

The protein resides in the cytoplasm. It catalyses the reaction 3-phosphoshikimate + phosphoenolpyruvate = 5-O-(1-carboxyvinyl)-3-phosphoshikimate + phosphate. The protein operates within metabolic intermediate biosynthesis; chorismate biosynthesis. Catalyzes the transfer of the enolpyruvyl moiety of phosphoenolpyruvate (PEP) to the 5-hydroxyl of shikimate-3-phosphate (S3P) to produce enolpyruvyl shikimate-3-phosphate and inorganic phosphate. The sequence is that of 3-phosphoshikimate 1-carboxyvinyltransferase from Methanococcus maripaludis (strain C5 / ATCC BAA-1333).